The primary structure comprises 346 residues: UDP-N-acetylenolpyruvoylglucosamine reductase (346 aa).

Residues 17-187 form the FAD-binding PCMH-type domain; that stretch reads IESQAYALIE…VAVGFTLKKE (171 aa). Arg163 is an active-site residue. Ser233 (proton donor) is an active-site residue. Residue Glu329 is part of the active site.

This sequence belongs to the MurB family. It depends on FAD as a cofactor.

It localises to the cytoplasm. The catalysed reaction is UDP-N-acetyl-alpha-D-muramate + NADP(+) = UDP-N-acetyl-3-O-(1-carboxyvinyl)-alpha-D-glucosamine + NADPH + H(+). Its pathway is cell wall biogenesis; peptidoglycan biosynthesis. Functionally, cell wall formation. The chain is UDP-N-acetylenolpyruvoylglucosamine reductase from Photobacterium profundum (strain SS9).